The chain runs to 119 residues: Large ribosomal subunit protein bL20 (119 aa).

This sequence belongs to the bacterial ribosomal protein bL20 family.

In terms of biological role, binds directly to 23S ribosomal RNA and is necessary for the in vitro assembly process of the 50S ribosomal subunit. It is not involved in the protein synthesizing functions of that subunit. This Bacillus velezensis (strain DSM 23117 / BGSC 10A6 / LMG 26770 / FZB42) (Bacillus amyloliquefaciens subsp. plantarum) protein is Large ribosomal subunit protein bL20.